Here is a 148-residue protein sequence, read N- to C-terminus: Lysozyme C-1 (148 aa).

A signal peptide spans 1-18 (MKALLTLGLLLLSVTAQA). Residues 19 to 148 (KVYNRCELAR…LSQYIRNCGV (130 aa)) enclose the C-type lysozyme domain. Cystine bridges form between Cys-24–Cys-146, Cys-48–Cys-134, Cys-83–Cys-99, and Cys-95–Cys-113. Active-site residues include Glu-53 and Asp-71.

The protein belongs to the glycosyl hydrolase 22 family. As to quaternary structure, monomer. Expressed strongly only in small intestine.

The protein localises to the secreted. It carries out the reaction Hydrolysis of (1-&gt;4)-beta-linkages between N-acetylmuramic acid and N-acetyl-D-glucosamine residues in a peptidoglycan and between N-acetyl-D-glucosamine residues in chitodextrins.. Its function is as follows. Lysozymes have primarily a bacteriolytic function; those in tissues and body fluids are associated with the monocyte-macrophage system and enhance the activity of immunoagents. Lyz1 is active against a range of Gram-positive and Gram-negative bacteria. Less effective than Lyz2 in killing Gram-negative bacteria. Lyz1 and Lyz2 are equally effective in killing Gram-positive bacteria. The protein is Lysozyme C-1 (Lyz1) of Mus musculus (Mouse).